The primary structure comprises 372 residues: Mitogen-activated protein kinase kinase kinase 17 (372 aa).

The region spanning 3–259 is the Protein kinase domain; the sequence is WTRGRILGRG…ATQLLNHPFL (257 aa). ATP contacts are provided by residues 9 to 17 and K32; that span reads LGRGSTATV. The active-site Proton acceptor is D126. A Phosphoserine modification is found at S312.

Belongs to the protein kinase superfamily. Ser/Thr protein kinase family. Binds to MKK3.

It localises to the nucleus. The catalysed reaction is L-seryl-[protein] + ATP = O-phospho-L-seryl-[protein] + ADP + H(+). It catalyses the reaction L-threonyl-[protein] + ATP = O-phospho-L-threonyl-[protein] + ADP + H(+). In terms of biological role, component of the abscisic acid (ABA) signaling pathway that may act as ABA signal transducer in the context of abiotic stresses. Triggers MPK7 activation in a MKK3-dependent manner. Mediates the ABA-dependent activation of the MKK3-MPK7 module. This chain is Mitogen-activated protein kinase kinase kinase 17, found in Arabidopsis thaliana (Mouse-ear cress).